Reading from the N-terminus, the 245-residue chain is Eukaryotic translation initiation factor 6 (245 aa).

This sequence belongs to the eIF-6 family. Monomer. Associates with the 60S ribosomal subunit.

It localises to the cytoplasm. The protein resides in the nucleus. It is found in the nucleolus. Functionally, binds to the 60S ribosomal subunit and prevents its association with the 40S ribosomal subunit to form the 80S initiation complex in the cytoplasm. May also be involved in ribosome biogenesis. The chain is Eukaryotic translation initiation factor 6 (eif6) from Danio rerio (Zebrafish).